A 395-amino-acid polypeptide reads, in one-letter code: S-adenosylmethionine synthase (395 aa).

Residue His-18 participates in ATP binding. Mg(2+) is bound at residue Asp-20. Residue Glu-46 coordinates K(+). Positions 59 and 103 each coordinate L-methionine. The segment at 103 to 113 (QSVDIAVGVDA) is flexible loop. Residues 170 to 172 (DAK), 235 to 236 (KF), Asp-244, 250 to 251 (RK), Ala-267, and Lys-271 each bind ATP. Residue Asp-244 coordinates L-methionine. Lys-275 provides a ligand contact to L-methionine.

Belongs to the AdoMet synthase family. In terms of assembly, homotetramer; dimer of dimers. Mg(2+) serves as cofactor. K(+) is required as a cofactor.

The protein resides in the cytoplasm. It carries out the reaction L-methionine + ATP + H2O = S-adenosyl-L-methionine + phosphate + diphosphate. It participates in amino-acid biosynthesis; S-adenosyl-L-methionine biosynthesis; S-adenosyl-L-methionine from L-methionine: step 1/1. Functionally, catalyzes the formation of S-adenosylmethionine (AdoMet) from methionine and ATP. The overall synthetic reaction is composed of two sequential steps, AdoMet formation and the subsequent tripolyphosphate hydrolysis which occurs prior to release of AdoMet from the enzyme. In Acidiphilium cryptum (strain JF-5), this protein is S-adenosylmethionine synthase.